Consider the following 31-residue polypeptide: Cyclotide cter-J (31 aa).

Residues 1–31 (GTVPCGESCVFIPCITGIAGCSCKNKVCYID) constitute a cross-link (cyclopeptide (Gly-Asp)). Cystine bridges form between C5-C21, C9-C23, and C14-C28.

Contains 3 disulfide bonds. In terms of processing, this is a cyclic peptide.

Probably participates in a plant defense mechanism. The chain is Cyclotide cter-J from Clitoria ternatea (Butterfly pea).